Here is a 236-residue protein sequence, read N- to C-terminus: 5'-methylthioadenosine/S-adenosylhomocysteine nucleosidase (236 aa).

Residue Glu12 is the Proton acceptor of the active site. Substrate-binding positions include Gly78, Ile153, and 174–175; that span reads ME. The Proton donor role is filled by Asp198.

It belongs to the PNP/UDP phosphorylase family. MtnN subfamily.

The catalysed reaction is S-adenosyl-L-homocysteine + H2O = S-(5-deoxy-D-ribos-5-yl)-L-homocysteine + adenine. It catalyses the reaction S-methyl-5'-thioadenosine + H2O = 5-(methylsulfanyl)-D-ribose + adenine. It carries out the reaction 5'-deoxyadenosine + H2O = 5-deoxy-D-ribose + adenine. The protein operates within amino-acid biosynthesis; L-methionine biosynthesis via salvage pathway; S-methyl-5-thio-alpha-D-ribose 1-phosphate from S-methyl-5'-thioadenosine (hydrolase route): step 1/2. Catalyzes the irreversible cleavage of the glycosidic bond in both 5'-methylthioadenosine (MTA) and S-adenosylhomocysteine (SAH/AdoHcy) to adenine and the corresponding thioribose, 5'-methylthioribose and S-ribosylhomocysteine, respectively. Also cleaves 5'-deoxyadenosine, a toxic by-product of radical S-adenosylmethionine (SAM) enzymes, into 5-deoxyribose and adenine. In Shewanella baltica (strain OS223), this protein is 5'-methylthioadenosine/S-adenosylhomocysteine nucleosidase.